Here is a 1385-residue protein sequence, read N- to C-terminus: PsbD mRNA maturation factor Nac2, chloroplastic (1385 aa).

The N-terminal 45 residues, 1 to 45 (MGALPCPAHIEHHQGLSSFGTRRVLRQSVACGAHRSRRRSLWAGA), are a transit peptide targeting the chloroplast. Residues 132-152 (GPHGAASATGAGSHSSSAGAP) show a composition bias toward low complexity. 7 disordered regions span residues 132-157 (GPHG…PTPR), 263-282 (AVAA…RSSA), 304-360 (TSSR…AAGP), 387-502 (RQQP…GHGQ), 546-568 (NGAG…SGTS), 726-756 (HADS…VAAA), and 840-899 (ARRA…APSA). Over residues 271 to 281 (QPHEHQQERSS) the composition is skewed to basic and acidic residues. Low complexity predominate over residues 304–313 (TSSRRGGRSS). The span at 403 to 412 (NGSGKSGSGG) shows a compositional bias: gly residues. Low complexity-rich tracts occupy residues 448 to 464 (APAA…RPAA), 554 to 568 (ASAS…SGTS), 729 to 744 (SSSS…SSSG), and 854 to 893 (ASTT…AAAG). 9 TPR repeats span residues 851–884 (RRGA…DPAS), 951–984 (GAVM…CPAD), 985–1018 (VALY…DRTD), 1019–1052 (KQLF…HPLN), 1053–1086 (TKII…DPLS), 1091–1124 (VHNR…HPNS), 1125–1158 (AALL…AGAF), 1160–1193 (AAVM…KQLN), and 1205–1238 (AWRA…APAV). Disordered stretches follow at residues 1237–1257 (AVRG…GRRP) and 1333–1385 (IQDP…ADDM). Residues 1356-1365 (QDADYYEEPE) show a composition bias toward acidic residues. A compositionally biased stretch (basic and acidic residues) spans 1374-1385 (AVRRPMPDADDM).

Part of 2 complexes of about 600 and less than 2000 kDa, both of which also contain non-polysomal RNA.

It localises to the plastid. Its subcellular location is the chloroplast stroma. Involved, directly or indirectly, in the processing of the chloroplast encoded psbD mRNA to its mature form, acting via the 5'-UTR of the psbD mRNA. The last 588 amino acids of the protein are sufficient to confer stability on the transcript in vivo. This Chlamydomonas reinhardtii (Chlamydomonas smithii) protein is PsbD mRNA maturation factor Nac2, chloroplastic (NAC2).